The following is a 60-amino-acid chain: Acrosin (60 aa).

The N-linked (GlcNAc...) asparagine glycan is linked to Asn3. The 37-residue stretch at 24–60 (IIGGQDAAHGSWPWMVSLQIFTYHNNRRYHVCGGSLL) folds into the Peptidase S1 domain.

The protein belongs to the peptidase S1 family. Heavy chain (catalytic) and a light chain linked by two disulfide bonds. Forms a heterodimer with SERPINA5.

The catalysed reaction is Preferential cleavage: Arg-|-Xaa, Lys-|-Xaa.. Its activity is regulated as follows. Inhibited by SERPINA5. Its function is as follows. Acrosin is the major protease of mammalian spermatozoa. It is a serine protease of trypsin-like cleavage specificity, it is synthesized in a zymogen form, proacrosin and stored in the acrosome. The chain is Acrosin (ACR) from Capra hircus (Goat).